Consider the following 338-residue polypeptide: Ketol-acid reductoisomerase (NADP(+)) (338 aa).

One can recognise a KARI N-terminal Rossmann domain in the interval methionine 1–threonine 181. Residues tyrosine 24–glutamine 27, arginine 47, serine 50, serine 52, and aspartate 82–glutamine 85 contribute to the NADP(+) site. Residue histidine 107 is part of the active site. Position 133 (glycine 133) interacts with NADP(+). The KARI C-terminal knotted domain maps to threonine 182–isoleucine 327. Residues aspartate 190, glutamate 194, glutamate 226, and glutamate 230 each coordinate Mg(2+). A substrate-binding site is contributed by serine 251.

The protein belongs to the ketol-acid reductoisomerase family. The cofactor is Mg(2+).

The enzyme catalyses (2R)-2,3-dihydroxy-3-methylbutanoate + NADP(+) = (2S)-2-acetolactate + NADPH + H(+). It carries out the reaction (2R,3R)-2,3-dihydroxy-3-methylpentanoate + NADP(+) = (S)-2-ethyl-2-hydroxy-3-oxobutanoate + NADPH + H(+). The protein operates within amino-acid biosynthesis; L-isoleucine biosynthesis; L-isoleucine from 2-oxobutanoate: step 2/4. Its pathway is amino-acid biosynthesis; L-valine biosynthesis; L-valine from pyruvate: step 2/4. Functionally, involved in the biosynthesis of branched-chain amino acids (BCAA). Catalyzes an alkyl-migration followed by a ketol-acid reduction of (S)-2-acetolactate (S2AL) to yield (R)-2,3-dihydroxy-isovalerate. In the isomerase reaction, S2AL is rearranged via a Mg-dependent methyl migration to produce 3-hydroxy-3-methyl-2-ketobutyrate (HMKB). In the reductase reaction, this 2-ketoacid undergoes a metal-dependent reduction by NADPH to yield (R)-2,3-dihydroxy-isovalerate. The polypeptide is Ketol-acid reductoisomerase (NADP(+)) (Alcanivorax borkumensis (strain ATCC 700651 / DSM 11573 / NCIMB 13689 / SK2)).